Consider the following 243-residue polypeptide: MSTAITRQIVLDTETTGMNQIGAHYEGHKIIEIGAVEVINRRLTGNNFHVYLKPDRLVDPEAFGVHGIADEFLLDKPVFADVVDEFLDYIRGAELVIHNASFDIGFMDYEFGLLKRDIPKTNTFCKVTDSLALARKMFPGKRNSLDALCSRYEIDNSKRTLHGALLDAQILAEVYLAMTGGQTSMTFAMEGETQRQQGEATIQRIVRQASRLRVVFASEEELAAHESRLDLVQKKGGSCLWRA.

A divalent metal cation-binding residues include Asp-12 and Glu-14. Positions 12, 14, 61, and 66 each coordinate substrate. His-162 (proton acceptor) is an active-site residue. Asp-167 provides a ligand contact to a divalent metal cation. Residue Asp-167 participates in substrate binding.

In terms of assembly, the DNA polymerase holoenzyme is a complex that contains 10 different types of subunits. These subunits are organized into 3 functionally essential subassemblies: the pol III core, the beta sliding clamp processivity factor and the clamp-loading complex. The pol III core (subunits alpha,epsilon and theta) contains the polymerase and the 3'-5' exonuclease proofreading activities. The polymerase is tethered to the template via the sliding clamp processivity factor. The clamp-loading complex assembles the beta processivity factor onto the primer template and plays a central role in the organization and communication at the replication fork. This complex contains delta, delta', psi and chi, and copies of either or both of two different DnaX proteins, gamma and tau. The composition of the holoenzyme is, therefore: (alpha,epsilon,theta)[2]-(gamma/tau)[3]-delta,delta', psi,chi-beta[4]. Requires Mg(2+) as cofactor. It depends on Mn(2+) as a cofactor.

The enzyme catalyses DNA(n) + a 2'-deoxyribonucleoside 5'-triphosphate = DNA(n+1) + diphosphate. Functionally, DNA polymerase III is a complex, multichain enzyme responsible for most of the replicative synthesis in bacteria. The epsilon subunit contains the editing function and is a proofreading 3'-5' exonuclease. This Salmonella typhi protein is DNA polymerase III subunit epsilon (dnaQ).